We begin with the raw amino-acid sequence, 599 residues long: MTDLTTHDLAQPGWQTRDHLDDPVVGELCNRFGPDAFTVQATRTGIPVVWVKREQLLDVVAFLKKQPKPYVMLFDLHGMDERLRTHREGLPAADYSVFYHIISIERNRDIMLKVALAESDLHVPTVTKLFPNANWYERETWEMFGITFNGHPHLTRIMMPHTWEGHPLRKDYPARATEFDPFVLTKQKEDLEMESLTFKPEEWGMKRGTENEDFMFLNLGPNHPSSHGAFRIILQLDGEEIVDCVPDVGYHHRGAEKMGERQSWHSYIPYTDRIEYLGGCVNEMPYVLAVEKLAGIEVPDRVKTIRVMLSELFRINSHLLYISTYIQDVGAMTPVFFAFTDRQKIYDLVEAITGFRMHPAWFRIGGVAHDLPRGWERLLREFLDWMPSRLDTYVKAALQNTILKGRTQGVAAYNAKEALDWGVTGAGLRATGIGFDVRKWRPYSGYENFDFEVPVGDGISDCYSRVMLKVEELRQSLRILDQCLKNMPEGPFKADHPLTTPPPKERTLQHIDTLINHFLQVSWGPVMPANESFQMVEATKGINSYYLTSDGGTMSYRTRIRTPSYAHLQQIPSVIRGCLVSDLIVYLGSIDFVMSDVDR.

Residues 1-189 are NADH dehydrogenase I subunit C; it reads MTDLTTHDLA…DPFVLTKQKE (189 aa). The tract at residues 213–599 is NADH dehydrogenase I subunit D; it reads DFMFLNLGPN…IDFVMSDVDR (387 aa).

This sequence in the N-terminal section; belongs to the complex I 30 kDa subunit family. The protein in the C-terminal section; belongs to the complex I 49 kDa subunit family. In terms of assembly, NDH-1 is composed of 13 different subunits. Subunits NuoB, CD, E, F, and G constitute the peripheral sector of the complex.

The protein localises to the cell inner membrane. The enzyme catalyses a quinone + NADH + 5 H(+)(in) = a quinol + NAD(+) + 4 H(+)(out). In terms of biological role, NDH-1 shuttles electrons from NADH, via FMN and iron-sulfur (Fe-S) centers, to quinones in the respiratory chain. The immediate electron acceptor for the enzyme in this species is believed to be ubiquinone. Couples the redox reaction to proton translocation (for every two electrons transferred, four hydrogen ions are translocated across the cytoplasmic membrane), and thus conserves the redox energy in a proton gradient. The chain is NADH-quinone oxidoreductase subunit C/D from Pectobacterium carotovorum subsp. carotovorum (strain PC1).